A 136-amino-acid polypeptide reads, in one-letter code: uncharacterized protein (136 aa).

The first 19 residues, 1-19 (MKKLLMVILGIALIGMAYA), serve as a signal peptide directing secretion.

This is an uncharacterized protein from Methanocaldococcus jannaschii (strain ATCC 43067 / DSM 2661 / JAL-1 / JCM 10045 / NBRC 100440) (Methanococcus jannaschii).